A 351-amino-acid chain; its full sequence is Probable minor fimbrial subunit LpfD (351 aa).

A signal peptide spans 1–22 (MKAAIALSLLGCVFGFSGKAFA).

It belongs to the fimbrial protein family.

Its subcellular location is the fimbrium. Part of the lpfABCC'DE fimbrial operon. LP fimbriae may participate in the interaction with eukaryotic cells by assisting in microcolony formation. The polypeptide is Probable minor fimbrial subunit LpfD (lpfD) (Escherichia coli O157:H7).